A 238-amino-acid polypeptide reads, in one-letter code: Fatty acid metabolism regulator protein (238 aa).

The HTH gntR-type domain occupies 6–74 (QSPAGFAEEY…HGKPTKVNNF (69 aa)). A DNA-binding region (H-T-H motif) is located at residues 34–53 (ERELSELIGVTRTTLREVLQ).

As to quaternary structure, homodimer.

It localises to the cytoplasm. In terms of biological role, multifunctional regulator of fatty acid metabolism. The sequence is that of Fatty acid metabolism regulator protein from Erwinia tasmaniensis (strain DSM 17950 / CFBP 7177 / CIP 109463 / NCPPB 4357 / Et1/99).